We begin with the raw amino-acid sequence, 96 residues long: Large ribosomal subunit protein eL21 (96 aa).

It belongs to the eukaryotic ribosomal protein eL21 family.

The polypeptide is Large ribosomal subunit protein eL21 (Methanothrix thermoacetophila (strain DSM 6194 / JCM 14653 / NBRC 101360 / PT) (Methanosaeta thermophila)).